We begin with the raw amino-acid sequence, 398 residues long: 4-hydroxy-3-methylbut-2-en-1-yl diphosphate synthase (ferredoxin) (398 aa).

[4Fe-4S] cluster-binding residues include cysteine 306, cysteine 309, cysteine 340, and glutamate 347.

Belongs to the IspG family. Requires [4Fe-4S] cluster as cofactor.

The catalysed reaction is (2E)-4-hydroxy-3-methylbut-2-enyl diphosphate + 2 oxidized [2Fe-2S]-[ferredoxin] + H2O = 2-C-methyl-D-erythritol 2,4-cyclic diphosphate + 2 reduced [2Fe-2S]-[ferredoxin] + H(+). Its pathway is isoprenoid biosynthesis; isopentenyl diphosphate biosynthesis via DXP pathway; isopentenyl diphosphate from 1-deoxy-D-xylulose 5-phosphate: step 5/6. In terms of biological role, converts 2C-methyl-D-erythritol 2,4-cyclodiphosphate (ME-2,4cPP) into 1-hydroxy-2-methyl-2-(E)-butenyl 4-diphosphate. The sequence is that of 4-hydroxy-3-methylbut-2-en-1-yl diphosphate synthase (ferredoxin) from Synechococcus sp. (strain CC9311).